Here is a 268-residue protein sequence, read N- to C-terminus: 5'-nucleotidase SurE (268 aa).

Positions 24, 25, 55, and 111 each coordinate a divalent metal cation.

Belongs to the SurE nucleotidase family. It depends on a divalent metal cation as a cofactor.

Its subcellular location is the cytoplasm. The catalysed reaction is a ribonucleoside 5'-phosphate + H2O = a ribonucleoside + phosphate. Its function is as follows. Nucleotidase that shows phosphatase activity on nucleoside 5'-monophosphates. The chain is 5'-nucleotidase SurE from Deinococcus radiodurans (strain ATCC 13939 / DSM 20539 / JCM 16871 / CCUG 27074 / LMG 4051 / NBRC 15346 / NCIMB 9279 / VKM B-1422 / R1).